The sequence spans 100 residues: Small ribosomal subunit protein uS14c (100 aa).

It belongs to the universal ribosomal protein uS14 family. Part of the 30S ribosomal subunit.

Its subcellular location is the plastid. It is found in the chloroplast. Binds 16S rRNA, required for the assembly of 30S particles. This Cyanidioschyzon merolae (strain NIES-3377 / 10D) (Unicellular red alga) protein is Small ribosomal subunit protein uS14c.